Here is a 1157-residue protein sequence, read N- to C-terminus: DNA-directed RNA polymerase subunit beta (1157 aa).

Belongs to the RNA polymerase beta chain family. The RNAP catalytic core consists of 2 alpha, 1 beta, 1 beta' and 1 omega subunit. When a sigma factor is associated with the core the holoenzyme is formed, which can initiate transcription.

The enzyme catalyses RNA(n) + a ribonucleoside 5'-triphosphate = RNA(n+1) + diphosphate. Its function is as follows. DNA-dependent RNA polymerase catalyzes the transcription of DNA into RNA using the four ribonucleoside triphosphates as substrates. In Tropheryma whipplei (strain TW08/27) (Whipple's bacillus), this protein is DNA-directed RNA polymerase subunit beta.